The primary structure comprises 699 residues: Elongation factor G 2 (699 aa).

The 283-residue stretch at 8-290 (ERYRNIGICA…AVIEYLPSPT (283 aa)) folds into the tr-type G domain. GTP contacts are provided by residues 17-24 (AHVDAGKT), 88-92 (DTPGH), and 142-145 (NKMD).

Belongs to the TRAFAC class translation factor GTPase superfamily. Classic translation factor GTPase family. EF-G/EF-2 subfamily.

The protein localises to the cytoplasm. Catalyzes the GTP-dependent ribosomal translocation step during translation elongation. During this step, the ribosome changes from the pre-translocational (PRE) to the post-translocational (POST) state as the newly formed A-site-bound peptidyl-tRNA and P-site-bound deacylated tRNA move to the P and E sites, respectively. Catalyzes the coordinated movement of the two tRNA molecules, the mRNA and conformational changes in the ribosome. In Colwellia psychrerythraea (strain 34H / ATCC BAA-681) (Vibrio psychroerythus), this protein is Elongation factor G 2.